The primary structure comprises 485 residues: Cysteine--tRNA ligase (485 aa).

Cys-27 provides a ligand contact to Zn(2+). Positions 29–39 (ITAYDLCHIGH) match the 'HIGH' region motif. Residues Cys-208, His-233, and Glu-237 each contribute to the Zn(2+) site. A 'KMSKS' region motif is present at residues 265–269 (KMSKS). Residue Lys-268 participates in ATP binding.

Belongs to the class-I aminoacyl-tRNA synthetase family. Monomer. Zn(2+) serves as cofactor.

It localises to the cytoplasm. It carries out the reaction tRNA(Cys) + L-cysteine + ATP = L-cysteinyl-tRNA(Cys) + AMP + diphosphate. This chain is Cysteine--tRNA ligase, found in Nitratidesulfovibrio vulgaris (strain DP4) (Desulfovibrio vulgaris).